Consider the following 366-residue polypeptide: Bacteriochlorophyll a protein (366 aa).

Residues His110, His145, His290, His297, and His298 each coordinate bacteriochlorophyll a.

Homotrimer. Each subunit contains 7 molecules of bacteriochlorophyll a.

Intermediary in the transfer of excitation energy from the chlorophyll to the reaction centers. This Prosthecochloris aestuarii protein is Bacteriochlorophyll a protein.